The primary structure comprises 343 residues: Trace amine-associated receptor 3 (343 aa).

Residues 1 to 35 lie on the Extracellular side of the membrane; it reads MDLIYIPEDLSSCPKFGNKSCPPTNRSFRVRMIMY. 2 N-linked (GlcNAc...) asparagine glycosylation sites follow: asparagine 18 and asparagine 25. 2 disulfides stabilise this stretch: cysteine 21-cysteine 185 and cysteine 104-cysteine 189. Residues 36-56 form a helical membrane-spanning segment; the sequence is LFMTGAMVITIFGNLVIIISI. Residues 57 to 68 lie on the Cytoplasmic side of the membrane; it reads SHFKQLHSPTNF. A helical membrane pass occupies residues 69–89; the sequence is LILSMATTDFLLGFVIMPYSM. Topologically, residues 90-150 are extracellular; sequence VRSVESCWYF…TTMTVSMIKR (61 aa). The chain crosses the membrane as a helical span at residues 151-168; that stretch reads LLAFCWAAPALFSFGLVL. At 169–172 the chain is on the cytoplasmic side; the sequence is SEAN. The tract at residues 173–186 is extracellular Loop 2 (ECL2); the sequence is VSGMQSYEILVACF. The helical transmembrane segment at 173-193 threads the bilayer; it reads VSGMQSYEILVACFNFCALTF. The Extracellular segment spans residues 194 to 198; that stretch reads NKFWG. Residues 199–223 form a helical membrane-spanning segment; it reads TILFTTCFFTPGSIMVGIYGKIFIV. Residues 224–257 lie on the Cytoplasmic side of the membrane; the sequence is SRRHARALSDMPANTKGAVGKNLSKKKDRKAAKT. Residues 258 to 278 traverse the membrane as a helical segment; that stretch reads LGIVMGVFLACWLPCFLAVLI. Residues 279 to 287 lie on the Extracellular side of the membrane; it reads DPYLDYSTP. A helical transmembrane segment spans residues 288 to 308; that stretch reads IIVLDLLVWLGYFNSTCNPLI. The Cytoplasmic segment spans residues 309 to 343; sequence HGFFYPWFRKALQFIVSGKIFRSNSDTANLFPEAH.

This sequence belongs to the G-protein coupled receptor 1 family. In terms of tissue distribution, specifically expressed in neurons of the olfactory epithelium.

It localises to the cell membrane. In terms of biological role, olfactory receptor activated by several primary trace amines, including isoamylamine. Activated by isoamylamine and cyclohexylamine, but not to the corresponding alcohols, isoamylalcohol and cyclohexanol. This receptor is probably mediated by the G(s)-class of G-proteins which activate adenylate cyclase. This is Trace amine-associated receptor 3 from Mus musculus (Mouse).